Here is a 156-residue protein sequence, read N- to C-terminus: ADP-ribosylation factor-like protein 2-binding protein (156 aa).

This sequence belongs to the ARL2BP family.

The protein localises to the cytoplasm. Its subcellular location is the mitochondrion intermembrane space. It localises to the cytoskeleton. It is found in the microtubule organizing center. The protein resides in the centrosome. The protein localises to the nucleus. Its subcellular location is the spindle. It localises to the cilium basal body. Functionally, plays a role as an effector of the ADP-ribosylation factor-like protein 2, ARL2. In Gallus gallus (Chicken), this protein is ADP-ribosylation factor-like protein 2-binding protein (ARL2BP).